The chain runs to 509 residues: MKRALISVSDKNGIVPFAEKLVELGVEIISTGGTKAAFEQAGVPVTGIEEVTEFPEMLDGRVKTLHPAIHGGLLARRDTAEHMEAIAAHDIKPIDLVVVNLYPFQETIQKSGVTLEEAIENIDIGGPSMLRSAAKNYAAVTVVVDTADYDTVLTELEEHGATTFETRQRLAAKVFRHTAAYDALIAEYLTNITGETFPEKVTLTYNRKQVLRYGENPHQDAAFYTEPGTVENSISSAKQLHGKELSYNNIRDADAALKIASEFTEPVAVAVKHMNPCGVGVGENIEEAYLKAYEADETSIFGGIVALNKEVDAKTAEHMSKIFLEIIIAPSFSEEAFAILAKKKNIRLLTVPFAGSVKGFEKTSVNGGLLIQASDSVIEDTASYEVVTEKQPTEAEMKALIAQWKIVKHVKSNAIVVGSDKQTLGIGAGQMNRIGSALIALKQAGEKAKGAVLASDAFFPMDDTVEAAAKAGITAIIQPGGSIKDKESIEMANKYGISMVLTHVRHFKH.

One can recognise an MGS-like domain in the interval 1–144 (MKRALISVSD…KNYAAVTVVV (144 aa)).

It belongs to the PurH family.

It catalyses the reaction (6R)-10-formyltetrahydrofolate + 5-amino-1-(5-phospho-beta-D-ribosyl)imidazole-4-carboxamide = 5-formamido-1-(5-phospho-D-ribosyl)imidazole-4-carboxamide + (6S)-5,6,7,8-tetrahydrofolate. The catalysed reaction is IMP + H2O = 5-formamido-1-(5-phospho-D-ribosyl)imidazole-4-carboxamide. It functions in the pathway purine metabolism; IMP biosynthesis via de novo pathway; 5-formamido-1-(5-phospho-D-ribosyl)imidazole-4-carboxamide from 5-amino-1-(5-phospho-D-ribosyl)imidazole-4-carboxamide (10-formyl THF route): step 1/1. It participates in purine metabolism; IMP biosynthesis via de novo pathway; IMP from 5-formamido-1-(5-phospho-D-ribosyl)imidazole-4-carboxamide: step 1/1. In Listeria monocytogenes serotype 4b (strain F2365), this protein is Bifunctional purine biosynthesis protein PurH.